The chain runs to 685 residues: Bifunctional lycopene cyclase/phytoene synthase (685 aa).

The segment at 15–255 (TLSYRHFHLL…LVSACFTFDR (241 aa)) is lycopene beta-cyclase. 7 helical membrane-spanning segments follow: residues 21–41 (FHLL…RPFL), 48–68 (KLIL…NLIV), 92–114 (YFFF…RWAL), 129–149 (LATP…KAAV), 156–176 (YFGM…WGSV), 187–207 (GLAP…ASDV), and 231–251 (LPIE…SACF). The interval 262–685 (QSVAENAPPL…RAVSAVYFGV (424 aa)) is phytoene synthase.

This sequence in the N-terminal section; belongs to the lycopene beta-cyclase family. The protein in the C-terminal section; belongs to the phytoene/squalene synthase family.

It is found in the membrane. The enzyme catalyses all-trans-lycopene = gamma-carotene. It catalyses the reaction gamma-carotene = all-trans-beta-carotene. It carries out the reaction 2 (2E,6E,10E)-geranylgeranyl diphosphate = 15-cis-phytoene + 2 diphosphate. The protein operates within carotenoid biosynthesis; beta-carotene biosynthesis. Its pathway is carotenoid biosynthesis; phytoene biosynthesis; all-trans-phytoene from geranylgeranyl diphosphate: step 1/1. Functionally, bifunctional enzyme that catalyzes the reactions from geranylgeranyl diphosphate to phytoene (phytoene synthase) and lycopene to beta-carotene via the intermediate gamma-carotene (lycopene cyclase). The polypeptide is Bifunctional lycopene cyclase/phytoene synthase (Sporisorium reilianum (strain SRZ2) (Maize head smut fungus)).